Consider the following 936-residue polypeptide: UPF0746 protein DDB_G0280787 (936 aa).

A compositionally biased stretch (basic and acidic residues) spans 1–19; that stretch reads MISNKRKEIDTIDGHHEKD. Residues 1–30 are disordered; sequence MISNKRKEIDTIDGHHEKDNDDDDSDGIDN. The 35-residue stretch at 44-78 folds into the SAP domain; it reads SGSTNYRELQIIAKSLGLASNGKKQLVYNRIEGYF. Residues 91–110 form a disordered region; that stretch reads ETNQQEEKKEEEQQQPQPQE.

The protein belongs to the UPF0746 family.

The sequence is that of UPF0746 protein DDB_G0280787 from Dictyostelium discoideum (Social amoeba).